Reading from the N-terminus, the 623-residue chain is ATP-dependent lipid A-core flippase (623 aa).

Helical transmembrane passes span 66–86, 103–123, 190–210, 290–310, and 317–337; these read LVLA…LAVI, VWFL…CNFF, LVVI…TLII, LTPL…AVAL, and ALTV…FDPI. The region spanning 67–349 is the ABC transmembrane type-1 domain; it reads VLAVLLMAGA…LTNLAGKMQK (283 aa). The region spanning 382–618 is the ABC transporter domain; sequence VEFRAVSHRF…NGLYASLYNM (237 aa). An ATP-binding site is contributed by 416-423; the sequence is GRSGSGKT.

Belongs to the ABC transporter superfamily. Lipid exporter (TC 3.A.1.106) family. In terms of assembly, homodimer.

It is found in the cell inner membrane. It carries out the reaction ATP + H2O + lipid A-core oligosaccharideSide 1 = ADP + phosphate + lipid A-core oligosaccharideSide 2.. Involved in lipopolysaccharide (LPS) biosynthesis. Translocates lipid A-core from the inner to the outer leaflet of the inner membrane. Transmembrane domains (TMD) form a pore in the inner membrane and the ATP-binding domain (NBD) is responsible for energy generation. This Bordetella bronchiseptica (strain ATCC BAA-588 / NCTC 13252 / RB50) (Alcaligenes bronchisepticus) protein is ATP-dependent lipid A-core flippase.